A 583-amino-acid chain; its full sequence is Proline--tRNA ligase (583 aa).

The protein belongs to the class-II aminoacyl-tRNA synthetase family. ProS type 1 subfamily. As to quaternary structure, homodimer.

Its subcellular location is the cytoplasm. The enzyme catalyses tRNA(Pro) + L-proline + ATP = L-prolyl-tRNA(Pro) + AMP + diphosphate. Its function is as follows. Catalyzes the attachment of proline to tRNA(Pro) in a two-step reaction: proline is first activated by ATP to form Pro-AMP and then transferred to the acceptor end of tRNA(Pro). As ProRS can inadvertently accommodate and process non-cognate amino acids such as alanine and cysteine, to avoid such errors it has two additional distinct editing activities against alanine. One activity is designated as 'pretransfer' editing and involves the tRNA(Pro)-independent hydrolysis of activated Ala-AMP. The other activity is designated 'posttransfer' editing and involves deacylation of mischarged Ala-tRNA(Pro). The misacylated Cys-tRNA(Pro) is not edited by ProRS. The polypeptide is Proline--tRNA ligase (Acidothermus cellulolyticus (strain ATCC 43068 / DSM 8971 / 11B)).